A 138-amino-acid polypeptide reads, in one-letter code: Small ribosomal subunit protein uS11 (138 aa).

A compositionally biased stretch (polar residues) spans 1-12; that stretch reads MAKQSAKGSTTT. Residues 1–37 form a disordered region; sequence MAKQSAKGSTTTKRQRGKRREKKNVPRGQAHIQSTFN. Positions 13–22 are enriched in basic residues; that stretch reads KRQRGKRREK.

Belongs to the universal ribosomal protein uS11 family. As to quaternary structure, part of the 30S ribosomal subunit. Interacts with proteins S7 and S18. Binds to IF-3.

In terms of biological role, located on the platform of the 30S subunit, it bridges several disparate RNA helices of the 16S rRNA. Forms part of the Shine-Dalgarno cleft in the 70S ribosome. The chain is Small ribosomal subunit protein uS11 from Roseiflexus castenholzii (strain DSM 13941 / HLO8).